Consider the following 313-residue polypeptide: MRRGALLAGALAAYAAYLVLGALLVARLEGPHEARLRAELETLRAQLLQRSPCVAAPALDAFVERVLAAGRLGRVVLANASGSANASDPAWDFASALFFASTLITTVGYGYTTPLTDAGKAFSIAFALLGVPTTMLLLTASAQRLSLLLTHVPLSWLSMRWGWDPRRAACWHLVALLGVVVTVCFLVPAVIFAHLEEAWSFLDAFYFCFISLSTIGLGDYVPGEAPGQPYRALYKVLVTVYLFLGLVAMVLVLQTFRHVSDLHGLTELILLPPPCPASFNADEDDRVDILGPQPESHQQLSASSHTDYASIPR.

Over 1 to 4 (MRRG) the chain is Cytoplasmic. Residues 5–25 (ALLAGALAAYAAYLVLGALLV) traverse the membrane as a helical segment. N-linked (GlcNAc...) asparagine glycosylation is found at N79 and N85. The pore-forming intramembrane region spans 90–115 (AWDFASALFFASTLITTVGYGYTTPL). Positions 106, 107, 108, and 109 each coordinate K(+). Residues 106–111 (TVGYGY) form a selectivity filter 1 region. The helical transmembrane segment at 121-141 (AFSIAFALLGVPTTMLLLTAS) threads the bilayer. At 142–172 (AQRLSLLLTHVPLSWLSMRWGWDPRRAACWH) the chain is on the cytoplasmic side. A helical transmembrane segment spans residues 173–193 (LVALLGVVVTVCFLVPAVIFA). An intramembrane region (pore-forming) is located at residues 199-223 (WSFLDAFYFCFISLSTIGLGDYVPG). Positions 214, 215, and 216 each coordinate K(+). The segment at 214–219 (TIGLGD) is selectivity filter 2. The helical transmembrane segment at 236–256 (VLVTVYLFLGLVAMVLVLQTF) threads the bilayer. Topologically, residues 257–313 (RHVSDLHGLTELILLPPPCPASFNADEDDRVDILGPQPESHQQLSASSHTDYASIPR) are cytoplasmic. Positions 282 to 290 (DEDDRVDIL) match the Lysosomal targeting signal motif. Positions 288-313 (DILGPQPESHQQLSASSHTDYASIPR) are disordered. The span at 295–307 (ESHQQLSASSHTD) shows a compositional bias: polar residues. Positions 308–312 (YASIP) match the Lysosomal targeting signal motif.

It belongs to the two pore domain potassium channel (TC 1.A.1.8) family. As to quaternary structure, homodimer; disulfide-linked. N-glycosylation is necessary for targeting to lysosomes. Widespread expression, detected in all tissues tested except for skeletal muscle. Strongest expression in placenta, pancreas, heart, colon and spleen, lower levels detected in peripheral blood leukocytes, lung, liver, kidney and thymus. Lowest expression detected in brain.

Its subcellular location is the late endosome membrane. It is found in the lysosome membrane. The enzyme catalyses K(+)(in) = K(+)(out). Functionally, k(+) channel that conducts outward rectifying currents at the membranes of the endolysosomal system. Active in lysosomes where it regulates lysosome numbers and size. In macrophages, enables K(+) efflux coupled to ATP-induced NLRP3 inflammasome activation upon bacterial infection. Cooperates with ATP-gated P2RX7 channels to activate NLRP3 inflammasome, with P2RX7 conducting Ca(2+) and Na(+) influx that sets the membrane potential for K(+) efflux. Does not display channel activity. In Homo sapiens (Human), this protein is Potassium channel subfamily K member 6.